Consider the following 104-residue polypeptide: Large ribosomal subunit protein bL21 (104 aa).

This sequence belongs to the bacterial ribosomal protein bL21 family. As to quaternary structure, part of the 50S ribosomal subunit. Contacts protein L20.

In terms of biological role, this protein binds to 23S rRNA in the presence of protein L20. This chain is Large ribosomal subunit protein bL21, found in Elusimicrobium minutum (strain Pei191).